A 408-amino-acid polypeptide reads, in one-letter code: Leucine aminopeptidase 1 (408 aa).

The signal sequence occupies residues 1–16 (MKVSSAIALLLPVVAA). A propeptide spanning residues 17 to 89 (RFVDSAFEQD…SAQSATTGPA (73 aa)) is cleaved from the precursor. Asn-95, Asn-108, and Asn-182 each carry an N-linked (GlcNAc...) asparagine glycan. Zn(2+) contacts are provided by His-190, Asp-209, Glu-248, and Asp-275. Cys-324 and Cys-328 are disulfide-bonded. A Zn(2+)-binding site is contributed by His-357.

This sequence belongs to the peptidase M28 family. M28E subfamily. As to quaternary structure, monomer. Zn(2+) serves as cofactor.

The protein localises to the secreted. Functionally, extracellular aminopeptidase that allows assimilation of proteinaceous substrates. The chain is Leucine aminopeptidase 1 (LAP1) from Grosmannia clavigera (strain kw1407 / UAMH 11150) (Blue stain fungus).